Reading from the N-terminus, the 902-residue chain is Zinc finger CCCH-type antiviral protein 1 (902 aa).

Position 2 is an N-acetylalanine (Ala2). Residues Ala2–Phe254 are N-terminal domain. A Nuclear localization signal motif is present at residues Arg69–Lys76. 4 C3H1-type zinc fingers span residues Cys73–His86, Cys88–His110, Cys150–His172, and Ser169–Leu193. The interval Ser221–Asp251 is disordered. Residues Met224–Phe254 form a binding to EXOSC5 region. The segment covering Ser235–Ser247 has biased composition (basic residues). A phosphoserine; by GSK3-beta mark is found at Ser257, Ser263, Ser267, and Ser271. Residues Ser265–Gln278 show a composition bias toward polar residues. Disordered regions lie at residues Ser265–Asp287 and Tyr299–Arg373. Residue Thr273 is modified to Phosphothreonine. Phosphoserine occurs at positions 275 and 284. The Nuclear export signal motif lies at Leu285–Asp292. Ser302, Ser327, Ser335, Ser355, Ser378, and Ser387 each carry phosphoserine. Polar residues-rich tracts occupy residues Ser310–Gln336 and Pro344–Gln369. The residue at position 393 (Thr393) is a Phosphothreonine. Phosphoserine occurs at positions 407, 469, 492, and 494. Residues Leu445–Asp481 form a disordered region. A Phosphothreonine modification is found at Thr554. Phosphoserine occurs at positions 572 and 590. Positions Ser594–Arg681 constitute a WWE domain. Residues Pro716–Ser902 enclose the PARP catalytic domain.

Belongs to the ARTD/PARP family. Homodimer or homooligomer. Homooligomerization is essential for its antiviral activity. Interacts with EXOSC5. Interacts (via N-terminal domain) with DDX17 in an RNA-independent manner. Interacts with EXOSC3, EXOSC7, DCP2 and DCP1A. Interacts with PARN in an RNA-independent manner. Interacts with XRN1 in an RNA-dependent manner. Isoform 2 interacts (via zinc-fingers) with RIGI in an RNA-dependent manner. Interacts (via N-terminal domain) with DHX30 (via N-terminus) in an RNA-independent manner. In terms of processing, phosphorylation at Ser-275 is essential for sequential phosphorylation of Ser-271, Ser-267, Ser-263 and Ser-257 by GSK3-beta. Phosphorylation by GSK3-beta enhances its antiviral activity.

It localises to the cytoplasm. The protein resides in the nucleus. Functionally, antiviral protein which inhibits the replication of viruses by recruiting the cellular RNA degradation machineries to degrade the viral mRNAs. Binds to a ZAP-responsive element (ZRE) present in the target viral mRNA, recruits cellular poly(A)-specific ribonuclease PARN to remove the poly(A) tail, and the 3'-5' exoribonuclease complex exosome to degrade the RNA body from the 3'-end. It also recruits the decapping complex DCP1-DCP2 through RNA helicase p72 (DDX17) to remove the cap structure of the viral mRNA to initiate its degradation from the 5'-end. Its target viruses belong to families which include retroviridae: human immunodeficiency virus type 1 (HIV-1), moloney and murine leukemia virus (MoMLV) and xenotropic MuLV-related virus (XMRV), filoviridae: ebola virus (EBOV) and marburg virus (MARV), togaviridae: sindbis virus (SINV) and Ross river virus (RRV). Specifically targets the multiply spliced but not unspliced or singly spliced HIV-1 mRNAs for degradation. Isoform 1 is a more potent viral inhibitor than isoform 2. Isoform 2 acts as a positive regulator of RIGI signaling resulting in activation of the downstream effector IRF3 leading to the expression of type I IFNs and IFN stimulated genes (ISGs). The protein is Zinc finger CCCH-type antiviral protein 1 of Homo sapiens (Human).